The chain runs to 801 residues: Phenylalanine--tRNA ligase beta subunit (801 aa).

Residues 39 to 153 (AEGLSKLVVG…EGAIPGDSIF (115 aa)) form the tRNA-binding domain. A B5 domain is found at 406-481 (TEPVEVSTTL…RIYGYEKLPT (76 aa)). Residues D459, D465, E468, and E469 each coordinate Mg(2+). One can recognise an FDX-ACB domain in the interval 708–801 (TKYPSVSRDI…LVEKVNAEIR (94 aa)).

The protein belongs to the phenylalanyl-tRNA synthetase beta subunit family. Type 1 subfamily. Tetramer of two alpha and two beta subunits. It depends on Mg(2+) as a cofactor.

The protein localises to the cytoplasm. It catalyses the reaction tRNA(Phe) + L-phenylalanine + ATP = L-phenylalanyl-tRNA(Phe) + AMP + diphosphate + H(+). The polypeptide is Phenylalanine--tRNA ligase beta subunit (Streptococcus agalactiae serotype Ia (strain ATCC 27591 / A909 / CDC SS700)).